The primary structure comprises 250 residues: Flavin-dependent thymidylate synthase (250 aa).

Residues 7-233 (LRVQLIAKTE…PAVFADFEVT (227 aa)) enclose the ThyX domain. DUMP contacts are provided by residues 92-95 (ELIR), 103-107 (QLSQR), and Arg172. FAD-binding positions include 95–97 (RHR) and Gln103. The ThyX motif signature appears at 95-105 (RHRHFSYSQLS). FAD-binding positions include 188-190 (NYR) and His194. Arg199 contacts dUMP. The active-site Involved in ionization of N3 of dUMP, leading to its activation is Arg199.

It belongs to the thymidylate synthase ThyX family. As to quaternary structure, homotetramer. Requires FAD as cofactor.

The catalysed reaction is dUMP + (6R)-5,10-methylene-5,6,7,8-tetrahydrofolate + NADPH + H(+) = dTMP + (6S)-5,6,7,8-tetrahydrofolate + NADP(+). Its pathway is pyrimidine metabolism; dTTP biosynthesis. Catalyzes the reductive methylation of 2'-deoxyuridine-5'-monophosphate (dUMP) to 2'-deoxythymidine-5'-monophosphate (dTMP) while utilizing 5,10-methylenetetrahydrofolate (mTHF) as the methyl donor, and NADPH and FADH(2) as the reductant. The sequence is that of Flavin-dependent thymidylate synthase from Mycobacterium marinum (strain ATCC BAA-535 / M).